A 365-amino-acid polypeptide reads, in one-letter code: Undecaprenyl-phosphate alpha-N-acetylglucosaminyl 1-phosphate transferase (365 aa).

10 helical membrane-spanning segments follow: residues 3-23 (LLTMSTELIYIFLFSMAFLFV), 45-65 (GLIPLVGGISVFAGVCFAFLI), 99-119 (IRAFVQALVGIAMMAVAGLYL), 132-152 (VLGPFGYVVTLFAVWAAINAF), 157-177 (GIDGLLGGLSCVSFGAMGILL), 187-207 (LWCFAMIATIIPYILLNLGLL), 213-233 (VFMGDAGSTLIGFTAIWILLQ), 242-262 (INPVTALWIIAIPLMDMIAIM), 293-313 (QAFVLITLAAALLAMIGVIGE), and 315-335 (LTFIPEWVMLALFLLAFLLYG).

It belongs to the glycosyltransferase 4 family. WecA subfamily. Mg(2+) serves as cofactor. It depends on Mn(2+) as a cofactor.

The protein resides in the cell inner membrane. The catalysed reaction is di-trans,octa-cis-undecaprenyl phosphate + UDP-N-acetyl-alpha-D-glucosamine = N-acetyl-alpha-D-glucosaminyl-di-trans,octa-cis-undecaprenyl diphosphate + UMP. It participates in bacterial outer membrane biogenesis; LPS O-antigen biosynthesis. The protein operates within bacterial outer membrane biogenesis; enterobacterial common antigen biosynthesis. Functionally, catalyzes the transfer of the GlcNAc-1-phosphate moiety from UDP-GlcNAc onto the carrier lipid undecaprenyl phosphate (C55-P), yielding GlcNAc-pyrophosphoryl-undecaprenyl (GlcNAc-PP-C55). The protein is Undecaprenyl-phosphate alpha-N-acetylglucosaminyl 1-phosphate transferase of Yersinia pestis.